The sequence spans 279 residues: Prephenate dehydratase (279 aa).

In terms of domain architecture, Prephenate dehydratase spans 2–178 (KIAYLGPRGS…NSTRFWLLGK (177 aa)). The ACT domain occupies 194–270 (LALTLPDNLP…LGVKVRLLGN (77 aa)).

It catalyses the reaction prephenate + H(+) = 3-phenylpyruvate + CO2 + H2O. It functions in the pathway amino-acid biosynthesis; L-phenylalanine biosynthesis; phenylpyruvate from prephenate: step 1/1. This chain is Prephenate dehydratase (pheA), found in Lactococcus lactis subsp. lactis (strain IL1403) (Streptococcus lactis).